The following is a 71-amino-acid chain: MAFLKKSLLLVLFLGLVSLSICEEEKRENEDEEKQEDDDQSENKRGLLSGILNTAGGLLGNLIGSLSNGES.

An N-terminal signal peptide occupies residues 1–22 (MAFLKKSLLLVLFLGLVSLSIC). A propeptide spanning residues 23–45 (EEEKRENEDEEKQEDDDQSENKR) is cleaved from the precursor. The segment at 25-46 (EKRENEDEEKQEDDDQSENKRG) is disordered. A compositionally biased stretch (acidic residues) spans 30-40 (EDEEKQEDDDQ). N68 carries the post-translational modification Asparagine amide. The propeptide occupies 70-71 (ES).

Belongs to the frog skin active peptide (FSAP) family. Plasticin subfamily. Expressed by the skin glands.

It is found in the secreted. Its subcellular location is the target cell membrane. In terms of biological role, neutral peptide with no antimicrobial activity. May act in synergy with cationic peptides by enhancing their activity. Has a moderate hemolytic activity. The protein is Plasticin-C1 of Agalychnis callidryas (Red-eyed tree frog).